We begin with the raw amino-acid sequence, 520 residues long: Bifunctional purine biosynthesis protein PurH (520 aa).

Residues 1 to 150 (MSDDRKAIKR…KNHPSVAVVV (150 aa)) form the MGS-like domain.

This sequence belongs to the PurH family.

It carries out the reaction (6R)-10-formyltetrahydrofolate + 5-amino-1-(5-phospho-beta-D-ribosyl)imidazole-4-carboxamide = 5-formamido-1-(5-phospho-D-ribosyl)imidazole-4-carboxamide + (6S)-5,6,7,8-tetrahydrofolate. The catalysed reaction is IMP + H2O = 5-formamido-1-(5-phospho-D-ribosyl)imidazole-4-carboxamide. Its pathway is purine metabolism; IMP biosynthesis via de novo pathway; 5-formamido-1-(5-phospho-D-ribosyl)imidazole-4-carboxamide from 5-amino-1-(5-phospho-D-ribosyl)imidazole-4-carboxamide (10-formyl THF route): step 1/1. It participates in purine metabolism; IMP biosynthesis via de novo pathway; IMP from 5-formamido-1-(5-phospho-D-ribosyl)imidazole-4-carboxamide: step 1/1. This chain is Bifunctional purine biosynthesis protein PurH, found in Corynebacterium glutamicum (strain R).